A 161-amino-acid chain; its full sequence is Ribosomal RNA large subunit methyltransferase H (161 aa).

Residues L78, G110, and L129–F134 each bind S-adenosyl-L-methionine.

Belongs to the RNA methyltransferase RlmH family. As to quaternary structure, homodimer.

It is found in the cytoplasm. The enzyme catalyses pseudouridine(1915) in 23S rRNA + S-adenosyl-L-methionine = N(3)-methylpseudouridine(1915) in 23S rRNA + S-adenosyl-L-homocysteine + H(+). Functionally, specifically methylates the pseudouridine at position 1915 (m3Psi1915) in 23S rRNA. This chain is Ribosomal RNA large subunit methyltransferase H, found in Heliobacterium modesticaldum (strain ATCC 51547 / Ice1).